The primary structure comprises 234 residues: Transcriptional activator protein TraR (234 aa).

Residues 167 to 232 (TAEDAAWLDP…HLTALAIRRK (66 aa)) enclose the HTH luxR-type domain. Residues 191-210 (MEEIADVEGVKYNSVRVKLR) constitute a DNA-binding region (H-T-H motif).

Belongs to the autoinducer-regulated transcriptional regulatory protein family.

Its function is as follows. Positive regulation of conjugal transfer of Ti plasmids. TraR activates target genes in the presence of AAI and also activates traR and traI themselves. This chain is Transcriptional activator protein TraR (traR), found in Rhizobium radiobacter (Agrobacterium tumefaciens).